The sequence spans 500 residues: Glycerol kinase (500 aa).

Thr-12 is a binding site for ADP. ATP-binding residues include Thr-12, Thr-13, and Ser-14. Thr-12 contributes to the sn-glycerol 3-phosphate binding site. Arg-16 contacts ADP. Sn-glycerol 3-phosphate-binding residues include Arg-82, Glu-83, Tyr-135, and Asp-245. Positions 82, 83, 135, 245, and 246 each coordinate glycerol. ADP contacts are provided by Thr-267 and Gly-310. ATP-binding residues include Thr-267, Gly-310, Gln-314, and Gly-411. Residues Gly-411 and Asn-415 each contribute to the ADP site.

It belongs to the FGGY kinase family. As to quaternary structure, homotetramer and homodimer (in equilibrium).

It carries out the reaction glycerol + ATP = sn-glycerol 3-phosphate + ADP + H(+). The protein operates within polyol metabolism; glycerol degradation via glycerol kinase pathway; sn-glycerol 3-phosphate from glycerol: step 1/1. Its activity is regulated as follows. Activated by phosphorylation and inhibited by fructose 1,6-bisphosphate (FBP). Its function is as follows. Key enzyme in the regulation of glycerol uptake and metabolism. Catalyzes the phosphorylation of glycerol to yield sn-glycerol 3-phosphate. The sequence is that of Glycerol kinase from Clostridium perfringens (strain 13 / Type A).